The following is a 540-amino-acid chain: Phenylalanine--tRNA ligase beta subunit (540 aa).

A B5 domain is found at 266–342 (LRPEKRTVSV…IAYGYDKIET (77 aa)). Mg(2+) contacts are provided by Asp-320, Asp-326, Glu-329, and Asp-330.

The protein belongs to the phenylalanyl-tRNA synthetase beta subunit family. Type 2 subfamily. Tetramer of two alpha and two beta subunits. It depends on Mg(2+) as a cofactor.

The protein localises to the cytoplasm. It carries out the reaction tRNA(Phe) + L-phenylalanine + ATP = L-phenylalanyl-tRNA(Phe) + AMP + diphosphate + H(+). This chain is Phenylalanine--tRNA ligase beta subunit, found in Methanocorpusculum labreanum (strain ATCC 43576 / DSM 4855 / Z).